A 416-amino-acid chain; its full sequence is Serine hydroxymethyltransferase (416 aa).

Residues leucine 120 and 124-126 (GHL) contribute to the (6S)-5,6,7,8-tetrahydrofolate site. N6-(pyridoxal phosphate)lysine is present on lysine 230. Position 246 (glutamate 246) interacts with (6S)-5,6,7,8-tetrahydrofolate.

It belongs to the SHMT family. Homodimer. Pyridoxal 5'-phosphate serves as cofactor.

It is found in the cytoplasm. It catalyses the reaction (6R)-5,10-methylene-5,6,7,8-tetrahydrofolate + glycine + H2O = (6S)-5,6,7,8-tetrahydrofolate + L-serine. The protein operates within one-carbon metabolism; tetrahydrofolate interconversion. It participates in amino-acid biosynthesis; glycine biosynthesis; glycine from L-serine: step 1/1. Catalyzes the reversible interconversion of serine and glycine with tetrahydrofolate (THF) serving as the one-carbon carrier. This reaction serves as the major source of one-carbon groups required for the biosynthesis of purines, thymidylate, methionine, and other important biomolecules. Also exhibits THF-independent aldolase activity toward beta-hydroxyamino acids, producing glycine and aldehydes, via a retro-aldol mechanism. The polypeptide is Serine hydroxymethyltransferase (Onion yellows phytoplasma (strain OY-M)).